Reading from the N-terminus, the 144-residue chain is Maximins 1/H1 (144 aa).

Residues 1–18 (MNFKYIVAVSFLLASAYA) form the signal peptide. A propeptide spanning residues 19-43 (RSEENDEQSLSQRDVLEEESLREIR) is cleaved from the precursor. Asparagine amide is present on Asn70. Residues 74–123 (TAEEHEVMKRLEAVMRDLDSLDYPEEAAERETRSFNQEEIANLFTKKEKR) constitute a propeptide that is removed on maturation. Leu143 bears the Leucine amide mark.

It belongs to the bombinin family. As to expression, expressed by the skin glands.

Its subcellular location is the secreted. Antibacterial peptide with amphipathic alpha-helical structure that has activity against both Gram-positive and Gram-negative bacteria. Also shows antimicrobial activity against the fungus C.albicans, but not against A.flavus nor P.uticale. It has little hemolytic activity. It possess a significant cytotoxicity against tumor cell lines, but does not possess a significant anti-HIV activity. Also shows high spermicidal activity. Its function is as follows. antibacterial peptide with activity against both Gram-positive and Gram-negative bacteria. Also shows antimicrobial activity against the fungus C.albicans. In addition, shows strong hemolytic activity. The protein is Maximins 1/H1 of Bombina maxima (Giant fire-bellied toad).